Consider the following 252-residue polypeptide: Chitooligosaccharide deacetylase (252 aa).

Mg(2+)-binding residues include histidine 61 and histidine 125.

It belongs to the YdjC deacetylase family. ChbG subfamily. As to quaternary structure, homodimer. It depends on Mg(2+) as a cofactor.

Its subcellular location is the cytoplasm. The enzyme catalyses N,N'-diacetylchitobiose + H2O = N-acetyl-beta-D-glucosaminyl-(1-&gt;4)-D-glucosamine + acetate. The catalysed reaction is diacetylchitobiose-6'-phosphate + H2O = N'-monoacetylchitobiose-6'-phosphate + acetate. It participates in glycan degradation; chitin degradation. Involved in the degradation of chitin. ChbG is essential for growth on the acetylated chitooligosaccharides chitobiose and chitotriose but is dispensable for growth on cellobiose and chitosan dimer, the deacetylated form of chitobiose. Deacetylation of chitobiose-6-P and chitotriose-6-P is necessary for both the activation of the chb promoter by the regulatory protein ChbR and the hydrolysis of phosphorylated beta-glucosides by the phospho-beta-glucosidase ChbF. Catalyzes the removal of only one acetyl group from chitobiose-6-P to yield monoacetylchitobiose-6-P, the inducer of ChbR and the substrate of ChbF. The chain is Chitooligosaccharide deacetylase from Escherichia coli O6:K15:H31 (strain 536 / UPEC).